A 413-amino-acid chain; its full sequence is Ribulose bisphosphate carboxylase large chain (413 aa).

Substrate contacts are provided by N100 and T150. K152 (proton acceptor) is an active-site residue. Substrate is bound at residue K154. K178, D180, and E181 together coordinate Mg(2+). Position 178 is an N6-carboxylysine (K178). The active-site Proton acceptor is H271. Substrate is bound by residues R272, H304, and S356.

It belongs to the RuBisCO large chain family. Type I subfamily. As to quaternary structure, heterohexadecamer of 8 large chains and 8 small chains; disulfide-linked. The disulfide link is formed within the large subunit homodimers. Mg(2+) serves as cofactor. In terms of processing, the disulfide bond which can form in the large chain dimeric partners within the hexadecamer appears to be associated with oxidative stress and protein turnover.

The protein resides in the plastid. The protein localises to the chloroplast. The catalysed reaction is 2 (2R)-3-phosphoglycerate + 2 H(+) = D-ribulose 1,5-bisphosphate + CO2 + H2O. It carries out the reaction D-ribulose 1,5-bisphosphate + O2 = 2-phosphoglycolate + (2R)-3-phosphoglycerate + 2 H(+). Functionally, ruBisCO catalyzes two reactions: the carboxylation of D-ribulose 1,5-bisphosphate, the primary event in carbon dioxide fixation, as well as the oxidative fragmentation of the pentose substrate in the photorespiration process. Both reactions occur simultaneously and in competition at the same active site. This chain is Ribulose bisphosphate carboxylase large chain (rbcL), found in Adiantum pedatum (Northern maidenhair fern).